Reading from the N-terminus, the 314-residue chain is tRNA dimethylallyltransferase (314 aa).

Position 10–17 (10–17) interacts with ATP; the sequence is GPTAVGKT. 12–17 serves as a coordination point for substrate; that stretch reads TAVGKT. 4 interaction with substrate tRNA regions span residues 35–38, 160–164, 239–244, and 272–279; these read DSMQ, RRVIR, QAIGYK, and KRQLTWFR.

This sequence belongs to the IPP transferase family. Monomer. Mg(2+) is required as a cofactor.

It catalyses the reaction adenosine(37) in tRNA + dimethylallyl diphosphate = N(6)-dimethylallyladenosine(37) in tRNA + diphosphate. In terms of biological role, catalyzes the transfer of a dimethylallyl group onto the adenine at position 37 in tRNAs that read codons beginning with uridine, leading to the formation of N6-(dimethylallyl)adenosine (i(6)A). This is tRNA dimethylallyltransferase (miaA) from Halalkalibacterium halodurans (strain ATCC BAA-125 / DSM 18197 / FERM 7344 / JCM 9153 / C-125) (Bacillus halodurans).